The chain runs to 352 residues: Eukaryotic translation initiation factor 3 subunit H (352 aa).

Positions 1-34 (MASRKEGTGSTATSSSSTGGAVGKGKGKGGSGDS) are disordered. Ser-3 is modified (phosphoserine). Residues 8-19 (TGSTATSSSSTG) are compositionally biased toward low complexity. Residues 20–32 (GAVGKGKGKGGSG) show a composition bias toward gly residues. Residues 39-173 (VQIDGLVVLK…LKAYRLTPKL (135 aa)) enclose the MPN domain. The residue at position 183 (Ser-183) is a Phosphoserine. Residues 265–300 (RNSSKQQQQKHQYQQRRQQENMQRQSRGEPPLPEED) form a disordered region. Positions 270–289 (QQQQKHQYQQRRQQENMQRQ) are enriched in low complexity. Lys-303 is covalently cross-linked (Glycyl lysine isopeptide (Lys-Gly) (interchain with G-Cter in SUMO2)).

This sequence belongs to the eIF-3 subunit H family. As to quaternary structure, component of the eukaryotic translation initiation factor 3 (eIF-3) complex, which is composed of 13 subunits: EIF3A, EIF3B, EIF3C, EIF3D, EIF3E, EIF3F, EIF3G, EIF3H, EIF3I, EIF3J, EIF3K, EIF3L and EIF3M. The eIF-3 complex appears to include 3 stable modules: module A is composed of EIF3A, EIF3B, EIF3G and EIF3I; module B is composed of EIF3F, EIF3H, and EIF3M; and module C is composed of EIF3C, EIF3D, EIF3E, EIF3K and EIF3L. EIF3C of module C binds EIF3B of module A and EIF3H of module B, thereby linking the three modules. EIF3J is a labile subunit that binds to the eIF-3 complex via EIF3B. The eIF-3 complex interacts with RPS6KB1 under conditions of nutrient depletion. Mitogenic stimulation leads to binding and activation of a complex composed of MTOR and RPTOR, leading to phosphorylation and release of RPS6KB1 and binding of EIF4B to eIF-3. Interacts with RNF139; the interaction leads to protein translation inhibitions in a ubiquitination-dependent manner. Interacts with DHX33; the interaction is independent of RNA.

The protein resides in the cytoplasm. In terms of biological role, component of the eukaryotic translation initiation factor 3 (eIF-3) complex, which is required for several steps in the initiation of protein synthesis. The eIF-3 complex associates with the 40S ribosome and facilitates the recruitment of eIF-1, eIF-1A, eIF-2:GTP:methionyl-tRNAi and eIF-5 to form the 43S pre-initiation complex (43S PIC). The eIF-3 complex stimulates mRNA recruitment to the 43S PIC and scanning of the mRNA for AUG recognition. The eIF-3 complex is also required for disassembly and recycling of post-termination ribosomal complexes and subsequently prevents premature joining of the 40S and 60S ribosomal subunits prior to initiation. The eIF-3 complex specifically targets and initiates translation of a subset of mRNAs involved in cell proliferation, including cell cycling, differentiation and apoptosis, and uses different modes of RNA stem-loop binding to exert either translational activation or repression. The polypeptide is Eukaryotic translation initiation factor 3 subunit H (Eif3h) (Rattus norvegicus (Rat)).